Here is a 308-residue protein sequence, read N- to C-terminus: Pyrroline-5-carboxylate reductase 3 (308 aa).

Belongs to the pyrroline-5-carboxylate reductase family. In terms of assembly, homodecamer; composed of 5 homodimers.

The protein localises to the cytoplasm. It carries out the reaction L-proline + NADP(+) = (S)-1-pyrroline-5-carboxylate + NADPH + 2 H(+). It catalyses the reaction L-proline + NAD(+) = (S)-1-pyrroline-5-carboxylate + NADH + 2 H(+). It functions in the pathway amino-acid biosynthesis; L-proline biosynthesis; L-proline from L-glutamate 5-semialdehyde: step 1/1. Oxidoreductase that catalyzes the last step in proline biosynthesis, which corresponds to the reduction of pyrroline-5-carboxylate (P5C) to L-proline using NAD(P)H. Proline is synthesized from either glutamate or ornithine; both are converted to P5C, and then to proline via pyrroline-5-carboxylate reductases (PYCRs). PYCR3 is exclusively linked to the biosynthesis of proline from ornithine. The chain is Pyrroline-5-carboxylate reductase 3 from Bos taurus (Bovine).